A 642-amino-acid polypeptide reads, in one-letter code: Kinesin-like protein KIF12 (642 aa).

Basic and acidic residues predominate over residues Met1–Arg13. The tract at residues Met1–Pro25 is disordered. At Ser6 the chain carries Phosphoserine. The region spanning Pro25–Ile360 is the Kinesin motor domain. Gly104–Thr111 provides a ligand contact to ATP. Ser369 bears the Phosphoserine mark. Positions Gln376–Leu465 form a coiled coil. Disordered stretches follow at residues Gly531–Asp561 and Pro579–Cys642. Residues Trp538–Pro548 show a composition bias toward pro residues. Polar residues predominate over residues Thr610–Cys642. A Phosphoserine modification is found at Ser634.

The protein belongs to the TRAFAC class myosin-kinesin ATPase superfamily. Kinesin family. In terms of tissue distribution, expressed in the liver.

The protein resides in the cytoplasm. The protein localises to the cytoskeleton. The polypeptide is Kinesin-like protein KIF12 (Kif12) (Mus musculus (Mouse)).